Consider the following 382-residue polypeptide: Dual-specificity RNA methyltransferase RlmN (382 aa).

Glu-113 acts as the Proton acceptor in catalysis. The Radical SAM core domain occupies 119–358 (EINRATLCIS…TTIRKQRGID (240 aa)). Cys-126 and Cys-363 form a disulfide bridge. Residues Cys-133, Cys-137, and Cys-140 each coordinate [4Fe-4S] cluster. Residues 187–188 (GE), Ser-219, 241–243 (SLH), and Asn-320 contribute to the S-adenosyl-L-methionine site. Residue Cys-363 is the S-methylcysteine intermediate of the active site.

This sequence belongs to the radical SAM superfamily. RlmN family. It depends on [4Fe-4S] cluster as a cofactor.

The protein resides in the cytoplasm. The catalysed reaction is adenosine(2503) in 23S rRNA + 2 reduced [2Fe-2S]-[ferredoxin] + 2 S-adenosyl-L-methionine = 2-methyladenosine(2503) in 23S rRNA + 5'-deoxyadenosine + L-methionine + 2 oxidized [2Fe-2S]-[ferredoxin] + S-adenosyl-L-homocysteine. It carries out the reaction adenosine(37) in tRNA + 2 reduced [2Fe-2S]-[ferredoxin] + 2 S-adenosyl-L-methionine = 2-methyladenosine(37) in tRNA + 5'-deoxyadenosine + L-methionine + 2 oxidized [2Fe-2S]-[ferredoxin] + S-adenosyl-L-homocysteine. Its function is as follows. Specifically methylates position 2 of adenine 2503 in 23S rRNA and position 2 of adenine 37 in tRNAs. m2A2503 modification seems to play a crucial role in the proofreading step occurring at the peptidyl transferase center and thus would serve to optimize ribosomal fidelity. The polypeptide is Dual-specificity RNA methyltransferase RlmN (Wigglesworthia glossinidia brevipalpis).